We begin with the raw amino-acid sequence, 122 residues long: MKIILFLTLIALASCELYHYQECVRGTTVLLKEPCPSGTYEGNSPFHPLADNKFALTCTSTHFAFACADGTRHTYQLRARSVSPKLFIRQEEVHQELYSPLFLIVAALVFITLCFTIKRKTE.

Positions 1–15 are cleaved as a signal peptide; that stretch reads MKIILFLTLIALASC. The X4e domain occupies 16–81; that stretch reads ELYHYQECVR…RHTYQLRARS (66 aa). The Virion surface portion of the chain corresponds to 16–96; that stretch reads ELYHYQECVR…FIRQEEVHQE (81 aa). Intrachain disulfides connect cysteine 23/cysteine 58 and cysteine 35/cysteine 67. A helical transmembrane segment spans residues 97–117; it reads LYSPLFLIVAALVFITLCFTI. Over 118 to 122 the chain is Intravirion; sequence KRKTE. Positions 118-122 match the Di-lysine motif motif; it reads KRKTE.

As to quaternary structure, interacts with the spike glycoprotein, M protein, E protein and the accessory protein 3.

The protein localises to the virion. It is found in the host endoplasmic reticulum membrane. It localises to the host endoplasmic reticulum-Golgi intermediate compartment membrane. The protein resides in the host Golgi apparatus membrane. In terms of biological role, non-structural protein which is dispensable for virus replication in cell culture. This Bat coronavirus Rp3/2004 (BtCoV/Rp3/2004) protein is Protein 7a.